A 618-amino-acid polypeptide reads, in one-letter code: MDKNTITGLVLIGILLVGFSFLSRPSEEQIAAQKRYYDSIAVVQQQEEALRAKTEAALANEKEETAADSASLFFNATKGKEAFTTIQNNLVEITLDNKGGRVYSALLKNYMGQDKKPVVLFNGSDASMNFNFYNKKGALQTKDFYFEAVNKTDSSVTMRLAADSASYIDFIYTLKPDNYLMSFVIKATGMDGKLAASTNYVDISWSQRARQIEKGYTYENRLADLTYKYTGDDVDNLSASKDDEKSVSERLDWIAFKNQFFSSVFIAEQDFEKTTVKSKMEKQGSGYIKDYSAEMSTFFDPTGKQPTDMYFYFGPNHYKTLTALDKGREEKWELNNLVYLGWPLIRWINKWITINVFDWLSGWGLSMGIVLLLLTIMVKIVVFPATWKTYMSSAKMRVLKPKIDEINKKYPKQEDAMKKQQEVMGLYSQYGVSPMGGCLPMLLQFPILMALFMFVPSAIELRQQSFLWADDLSTYDAFITFPFHIPFLGNHLSLFCLLMTVTNILNTKYTMQQQDTGAQPQMAAMKWMMYLMPIMFLFVLNDYPSGLNYYYFISTLISVVTMIILRRTTDENKLLTELEAKKKDPKQMKKTGFAARLEAMQKQQEQLAKERANKQNKK.

A run of 6 helical transmembrane segments spans residues 3–23 (KNTI…SFLS), 363–383 (WGLS…IVVF), 439–459 (LPML…PSAI), 478–498 (FITF…FCLL), 520–540 (PQMA…LFVL), and 545–565 (SGLN…MIIL).

It belongs to the OXA1/ALB3/YidC family. Type 1 subfamily. Interacts with the Sec translocase complex via SecD. Specifically interacts with transmembrane segments of nascent integral membrane proteins during membrane integration.

It is found in the cell membrane. Required for the insertion and/or proper folding and/or complex formation of integral membrane proteins into the membrane. Involved in integration of membrane proteins that insert both dependently and independently of the Sec translocase complex, as well as at least some lipoproteins. Aids folding of multispanning membrane proteins. The polypeptide is Membrane protein insertase YidC (Bacteroides fragilis (strain YCH46)).